The following is a 222-amino-acid chain: uncharacterized protein (222 aa).

This is an uncharacterized protein from Klebsiella pneumoniae.